We begin with the raw amino-acid sequence, 872 residues long: DNA mismatch repair protein MutS (872 aa).

602-609 (GPNMSGKS) lines the ATP pocket.

The protein belongs to the DNA mismatch repair MutS family.

Its function is as follows. This protein is involved in the repair of mismatches in DNA. It is possible that it carries out the mismatch recognition step. This protein has a weak ATPase activity. This chain is DNA mismatch repair protein MutS, found in Staphylococcus aureus (strain bovine RF122 / ET3-1).